The chain runs to 258 residues: Regulatory protein RecX (258 aa).

It belongs to the RecX family.

Its subcellular location is the cytoplasm. Modulates RecA activity. This chain is Regulatory protein RecX, found in Streptococcus thermophilus (strain CNRZ 1066).